A 448-amino-acid chain; its full sequence is UDP-glycosyltransferase 79B5 (448 aa).

UDP-alpha-D-glucose is bound by residues Thr261, 320-322 (LEQ), 337-345 (HCGFGSMWE), and 359-362 (LADQ).

It belongs to the UDP-glycosyltransferase family.

This chain is UDP-glycosyltransferase 79B5 (UGT79B5), found in Arabidopsis thaliana (Mouse-ear cress).